The chain runs to 346 residues: Lysyl aminopeptidase (346 aa).

Residues H63 and D177 each contribute to the Zn(2+) site. E207 acts as the Proton acceptor in catalysis. Zn(2+) is bound by residues E208, D230, and H314.

Homotetramer. The cofactor is Zn(2+).

It carries out the reaction Preferentially, release of N-terminal lysine.. In terms of biological role, hydrolyzes di-, tri- and tetrapeptides with a lysine as the N-terminal amino acid and with Gly, Lys, Ala, Phe or Glu in the second position. The protein is Lysyl aminopeptidase of Pyrococcus furiosus (strain ATCC 43587 / DSM 3638 / JCM 8422 / Vc1).